A 467-amino-acid polypeptide reads, in one-letter code: Tyrosine phenol-lyase (467 aa).

N6-(pyridoxal phosphate)lysine is present on Lys-268.

The protein belongs to the beta-eliminating lyase family. In terms of assembly, homotetramer. Requires pyridoxal 5'-phosphate as cofactor.

The catalysed reaction is L-tyrosine + H2O = phenol + pyruvate + NH4(+). In Nostoc punctiforme (strain ATCC 29133 / PCC 73102), this protein is Tyrosine phenol-lyase.